We begin with the raw amino-acid sequence, 123 residues long: Ribonuclease P protein component (123 aa).

It belongs to the RnpA family. In terms of assembly, consists of a catalytic RNA component (M1 or rnpB) and a protein subunit.

It carries out the reaction Endonucleolytic cleavage of RNA, removing 5'-extranucleotides from tRNA precursor.. Its function is as follows. RNaseP catalyzes the removal of the 5'-leader sequence from pre-tRNA to produce the mature 5'-terminus. It can also cleave other RNA substrates such as 4.5S RNA. The protein component plays an auxiliary but essential role in vivo by binding to the 5'-leader sequence and broadening the substrate specificity of the ribozyme. In Bordetella bronchiseptica (strain ATCC BAA-588 / NCTC 13252 / RB50) (Alcaligenes bronchisepticus), this protein is Ribonuclease P protein component.